Consider the following 616-residue polypeptide: Dihydroxy-acid dehydratase (616 aa).

Aspartate 81 contributes to the Mg(2+) binding site. Cysteine 122 provides a ligand contact to [2Fe-2S] cluster. Positions 123 and 124 each coordinate Mg(2+). The residue at position 124 (lysine 124) is an N6-carboxylysine. Cysteine 195 serves as a coordination point for [2Fe-2S] cluster. Glutamate 491 provides a ligand contact to Mg(2+). Residue serine 517 is the Proton acceptor of the active site.

The protein belongs to the IlvD/Edd family. Homodimer. Requires [2Fe-2S] cluster as cofactor. The cofactor is Mg(2+).

It carries out the reaction (2R)-2,3-dihydroxy-3-methylbutanoate = 3-methyl-2-oxobutanoate + H2O. The catalysed reaction is (2R,3R)-2,3-dihydroxy-3-methylpentanoate = (S)-3-methyl-2-oxopentanoate + H2O. It functions in the pathway amino-acid biosynthesis; L-isoleucine biosynthesis; L-isoleucine from 2-oxobutanoate: step 3/4. Its pathway is amino-acid biosynthesis; L-valine biosynthesis; L-valine from pyruvate: step 3/4. Its function is as follows. Functions in the biosynthesis of branched-chain amino acids. Catalyzes the dehydration of (2R,3R)-2,3-dihydroxy-3-methylpentanoate (2,3-dihydroxy-3-methylvalerate) into 2-oxo-3-methylpentanoate (2-oxo-3-methylvalerate) and of (2R)-2,3-dihydroxy-3-methylbutanoate (2,3-dihydroxyisovalerate) into 2-oxo-3-methylbutanoate (2-oxoisovalerate), the penultimate precursor to L-isoleucine and L-valine, respectively. The protein is Dihydroxy-acid dehydratase of Salmonella gallinarum (strain 287/91 / NCTC 13346).